The chain runs to 277 residues: Phosphoenolpyruvate synthase regulatory protein (277 aa).

157–164 (GVSRCGKT) provides a ligand contact to ADP.

Belongs to the pyruvate, phosphate/water dikinase regulatory protein family. PSRP subfamily.

The enzyme catalyses [pyruvate, water dikinase] + ADP = [pyruvate, water dikinase]-phosphate + AMP + H(+). The catalysed reaction is [pyruvate, water dikinase]-phosphate + phosphate + H(+) = [pyruvate, water dikinase] + diphosphate. Bifunctional serine/threonine kinase and phosphorylase involved in the regulation of the phosphoenolpyruvate synthase (PEPS) by catalyzing its phosphorylation/dephosphorylation. The sequence is that of Phosphoenolpyruvate synthase regulatory protein from Salmonella gallinarum (strain 287/91 / NCTC 13346).